Here is a 288-residue protein sequence, read N- to C-terminus: MDDISVSKSNHGNVVVLNIKASSLADTSLPSNKHESSSPPLLSVHFLQKLLAELVGTYYLIFAGCAAIAVNAQHNHVVTLVGIAVVWGIVIMVLVYCLGHLSAHFNPAVTLALASSQRFPLNQVPAYITVQVIGSTLASATLRLLFDLNNDVCSKKHDVFLGSSPSGSDLQAFVMEFIITGFLMLVVCAVTTTKRTTEELEGLIIGATVTLNVIFAGEVSGASMNPARSIGPALVWGCYKGIWIYLLAPTLGAVSGALIHKMLPSIQNAEPEFSKTGSSHKRVTDLPL.

The residue at position 1 (M1) is an N-acetylmethionine. Transmembrane regions (helical) follow at residues 50 to 70 and 77 to 97; these read LLAELVGTYYLIFAGCAAIAV and VVTLVGIAVVWGIVIMVLVYC. Residues 106–108 carry the NPA 1 motif; the sequence is NPA. A run of 3 helical transmembrane segments spans residues 126–146, 170–190, and 202–222; these read AYITVQVIGSTLASATLRLLF, LQAFVMEFIITGFLMLVVCAV, and GLIIGATVTLNVIFAGEVSGA. An NPA 2 motif is present at residues 225–227; the sequence is NPA. A helical transmembrane segment spans residues 234-254; the sequence is LVWGCYKGIWIYLLAPTLGAV. A Phosphoserine modification is found at S278.

It belongs to the MIP/aquaporin (TC 1.A.8) family. NIP (TC 1.A.8.12) subfamily. Specifically expressed in roots with high expression in root elongation zone and root stele.

Its subcellular location is the endoplasmic reticulum membrane. Functionally, low water transport activity in yeast cells. The protein is Aquaporin NIP2-1 (NIP2-1) of Arabidopsis thaliana (Mouse-ear cress).